Here is a 336-residue protein sequence, read N- to C-terminus: Cyclin-H1-1 (336 aa).

Ala-2 carries the N-acetylalanine modification. Residues 297–336 (KSCLGHSSSHDESKKREKRSKHKSHRSSNDTPNGAPPPIG) form a disordered region. Over residues 312–322 (REKRSKHKSHR) the composition is skewed to basic residues.

The protein belongs to the cyclin family. Interacts with CDKA-1, CDKD-2 and CDKD-3, but not CDKD-1 and CDKF-1.

It is found in the cytoplasm. It localises to the nucleus. In terms of biological role, associates with CDK-2 and CDK-3 and activates the CDK kinases. The protein is Cyclin-H1-1 (CYCH1-1) of Arabidopsis thaliana (Mouse-ear cress).